A 1131-amino-acid chain; its full sequence is DNA polymerase II large subunit (1131 aa).

It belongs to the archaeal DNA polymerase II family. As to quaternary structure, heterodimer of a large subunit and a small subunit.

The enzyme catalyses DNA(n) + a 2'-deoxyribonucleoside 5'-triphosphate = DNA(n+1) + diphosphate. The catalysed reaction is Exonucleolytic cleavage in the 3'- to 5'-direction to yield nucleoside 5'-phosphates.. Functionally, possesses two activities: a DNA synthesis (polymerase) and an exonucleolytic activity that degrades single-stranded DNA in the 3'- to 5'-direction. Has a template-primer preference which is characteristic of a replicative DNA polymerase. In Methanococcus vannielii (strain ATCC 35089 / DSM 1224 / JCM 13029 / OCM 148 / SB), this protein is DNA polymerase II large subunit.